The sequence spans 456 residues: Histidine--tRNA ligase (456 aa).

The span at 1–11 shows a compositional bias: polar residues; the sequence is MTQNENPSAQS. The segment at 1–22 is disordered; that stretch reads MTQNENPSAQSGAKPEDKARPA.

It belongs to the class-II aminoacyl-tRNA synthetase family. In terms of assembly, homodimer.

It is found in the cytoplasm. It carries out the reaction tRNA(His) + L-histidine + ATP = L-histidyl-tRNA(His) + AMP + diphosphate + H(+). The sequence is that of Histidine--tRNA ligase from Cupriavidus pinatubonensis (strain JMP 134 / LMG 1197) (Cupriavidus necator (strain JMP 134)).